A 759-amino-acid chain; its full sequence is MESVRIEQMLSLPAEVSSDNLESAERGASAAQVDMGPHPKVAAEGPAPLPTREPEQEQSPGTSTPESKVLLTQADALASRGRIREALEVYRQLSERQQLVAEQLEQLVRCLAEKVPQGEALAPAPPDEGSTASGTVAAEETGAAAAAAATEVWDGFKCRKCHGFLSDPVSLSCGHTFCKLCLERGRAADRRCALCGVKLSALMVATGRARGARRAGQQPPPPLRVNVVLSGLLGKLFPGPARASQLRHEGNRLYRERQVEAALLKYNEAVKLAPNDHLLYSNRSQIYFTLESHENALHDAEIACKLRPMGFKAHFRKAQALATLGKVEEALREFLYCVSLDGKNKRARCEAQRDNLELPHCSSQEEAAARGDGSSLMDPAKVKGDGQQHHMKDQEEEEEKWDATSPKAASSKTGKCQEKKRKHCQIESQEETGMPNKASKQDPPTDQGDKPALSLPLASFDASDLECALCMRLFYEPVTTPCGHTFCLKCLERCLDHNAKCPLCKDGLSQCLASRKYSKNVIMEELIAKFLPEELKERRKLYEEEMEELSNLNKNVPIFVCTMAYPTVPCPLHIFEPCYRLMIRRCIETGTRQFGMCLGDPVKGFAEYGCILEIRNVQFFADGRSVVDSIGKRRFRVLHQSQRDGYNTADIEYIEDQKVQGEDCAELMGLHNCVYQQASLWFHSLKLSLKNRILNHFGPMPEKDADPQMNPNGPAWCWWMLAVLPLESRAQLPFLAMRSLKDRLNGIRRVLAFISRNQN.

The segment at 1–69 (MESVRIEQML…PGTSTPESKV (69 aa)) is disordered. A compositionally biased stretch (polar residues) spans 57-66 (EQSPGTSTPE). The stretch at 67-100 (SKVLLTQADALASRGRIREALEVYRQLSERQQLV) is one TPR 1 repeat. Residues 158–196 (CRKCHGFLSDPVSLSCGHTFCKLCLERGRAADRRCALCG) form an RING-type 1 zinc finger. TPR repeat units lie at residues 243-276 (ASQL…APND), 278-310 (LLYS…RPMG), and 312-344 (KAHF…DGKN). The segment at 360 to 454 (HCSSQEEAAA…TDQGDKPALS (95 aa)) is disordered. Residues 380-393 (AKVKGDGQQHHMKD) are compositionally biased toward basic and acidic residues. The segment at 467–505 (CALCMRLFYEPVTTPCGHTFCLKCLERCLDHNAKCPLCK) adopts an RING-type 2 zinc-finger fold. The region spanning 546–755 (MEELSNLNKN…GIRRVLAFIS (210 aa)) is the Lon N-terminal domain.

The polypeptide is LON peptidase N-terminal domain and RING finger protein 3 (LONRF3) (Homo sapiens (Human)).